A 542-amino-acid polypeptide reads, in one-letter code: Chaperonin GroEL (542 aa).

Residues 29-32 (TLGP), lysine 50, 86-90 (DGTTT), glycine 413, 477-479 (NAA), and aspartate 493 each bind ATP.

The protein belongs to the chaperonin (HSP60) family. In terms of assembly, forms a cylinder of 14 subunits composed of two heptameric rings stacked back-to-back. Interacts with the co-chaperonin GroES.

It is found in the cytoplasm. The enzyme catalyses ATP + H2O + a folded polypeptide = ADP + phosphate + an unfolded polypeptide.. Functionally, together with its co-chaperonin GroES, plays an essential role in assisting protein folding. The GroEL-GroES system forms a nano-cage that allows encapsulation of the non-native substrate proteins and provides a physical environment optimized to promote and accelerate protein folding. The chain is Chaperonin GroEL from Solibacter usitatus (strain Ellin6076).